Here is a 392-residue protein sequence, read N- to C-terminus: Leucine-rich repeat-containing protein 74B (392 aa).

Residues 24-46 are disordered; that stretch reads RLSGVPEAEQGPEANWDSDLETE. 9 LRR repeats span residues 106 to 129, 134 to 157, 162 to 185, 192 to 213, 220 to 241, 248 to 269, 276 to 297, 304 to 325, and 334 to 356; these read NPYVKRLDLRDNGLCGAGAEALAG, SSSIHDVDLSENQLGVAGAQALCA, NQAMRKMQLSGNGLEEQAAQHLAE, DLKSLDLSYNQLNDQAGETLGP, GLTELNVSWNHLRGPGAVAFAR, FLKVLDISYNGFGDPGASAVGE, VLEELNMSNNRISAMGALSLGL, TLRILVVSRNPMRSEGCFGLLK, and ALELLDFSDIQVNAEFDGLASSV.

This chain is Leucine-rich repeat-containing protein 74B, found in Homo sapiens (Human).